The primary structure comprises 624 residues: MAVIKEKAECCTLLVDELYGQLPARVYATLFQRGKLSVRLISQFSKLSARQVKNGLCVLQQHNLLFYSVDANSGEAEYSVNHEYAYNLVRTGKILEMVDNSYGPAGRDVMQNLLLLGQTRISDLVAAYQAKINEVNNDDAWLNDKKPELAIKSKAQLNSVLCRLIEAELIDVIHSKTFQSAHEIEKQVHREVMDVYFSNGIKGTKAKIEFEQRVAEGLRKVREESKTLKRKLAQNGGASKRRKLAVGNETNGAPEEEEDLDPALDPRQVIRINYEKCIVELRSRRLVQYVNETLGETTGYVYGQLLKQLTKNISRCKSDPLIDALTPEEKVTPSVTTNEILDKVKTSIDLTLGIGKIPSKSISKSAAERLTPLAPKDKIPFMNQDDSDDDEEDGDYSDSDEEMDTKKENGDAPVARMSRPEQLRQHLLLLAEGHPGFVRHCGEDEWTVDFKPLMENLRATELDSIIEQTSGRQGLRLIRILRTKGKLGEQALQSLSLMRKVDLQQKMLEMRLVGFAHTQEVPRDNKADPKKSIFLWYCDTEQAYSSLIAKCYATMVHCLQVLEVRRQKDKDVLSLAKRTNVKGKEKDMMRDESYARFAKFLKDERLLMAEMMRIDDTLALLQDY.

Disordered regions lie at residues 229-260 and 373-418; these read KRKL…EEDL and LAPK…ARMS. Positions 385–403 are enriched in acidic residues; that stretch reads DDSDDDEEDGDYSDSDEEM. The leucine-zipper stretch occupies residues 551–572; that stretch reads CYATMVHCLQVLEVRRQKDKDV.

Belongs to the RNA polymerase beta chain family. As to quaternary structure, component of the RNA polymerase III (Pol III) complex consisting of 17 subunits.

It is found in the nucleus. In terms of biological role, DNA-dependent RNA polymerase catalyzes the transcription of DNA into RNA using the four ribonucleoside triphosphates as substrates. Specific core component of RNA polymerase III which synthesizes small RNAs, such as 5S rRNA and tRNAs. The chain is DNA-directed RNA polymerase III subunit rpc-3 (rpc-82) from Neurospora crassa (strain ATCC 24698 / 74-OR23-1A / CBS 708.71 / DSM 1257 / FGSC 987).